Here is a 242-residue protein sequence, read N- to C-terminus: Ras-like protein family member 11A (242 aa).

Residues 17 to 241 (ESSSDYLLPK…SSKAKAASTL (225 aa)) are small GTPase-like. GTP is bound by residues 34–41 (GASCVGKS), 81–85 (DTPGG), and 147–150 (NKGD).

The protein belongs to the small GTPase superfamily. Ras family. As to quaternary structure, interacts with UBF/UBTF.

The protein resides in the nucleus. It is found in the nucleolus. The enzyme catalyses GTP + H2O = GDP + phosphate + H(+). Functionally, regulator of rDNA transcription. Acts in cooperation UBF/UBTF and positively regulates RNA polymerase I transcription. The polypeptide is Ras-like protein family member 11A (Rattus norvegicus (Rat)).